Here is a 70-residue protein sequence, read N- to C-terminus: Protein SlyX homolog (70 aa).

Belongs to the SlyX family.

In Shewanella sp. (strain MR-4), this protein is Protein SlyX homolog.